The sequence spans 600 residues: Glutamine--fructose-6-phosphate aminotransferase [isomerizing] (600 aa).

The Nucleophile; for GATase activity role is filled by cysteine 2. Residues 2–217 enclose the Glutamine amidotransferase type-2 domain; the sequence is CGIVGYIGQL…DKEMVIVTDK (216 aa). 2 SIS domains span residues 283–422 and 452–590; these read ISNA…SRGK and IARE…VDKP. Lysine 595 serves as the catalytic For Fru-6P isomerization activity.

As to quaternary structure, homodimer.

It is found in the cytoplasm. It catalyses the reaction D-fructose 6-phosphate + L-glutamine = D-glucosamine 6-phosphate + L-glutamate. In terms of biological role, catalyzes the first step in hexosamine metabolism, converting fructose-6P into glucosamine-6P using glutamine as a nitrogen source. The sequence is that of Glutamine--fructose-6-phosphate aminotransferase [isomerizing] from Bacillus licheniformis (strain ATCC 14580 / DSM 13 / JCM 2505 / CCUG 7422 / NBRC 12200 / NCIMB 9375 / NCTC 10341 / NRRL NRS-1264 / Gibson 46).